The following is a 306-amino-acid chain: Flavin adenine dinucleotide synthase (306 aa).

FAD-binding positions include serine 59, isoleucine 107, glycine 164, 182-185, arginine 190, and arginine 300; that span reads DSNW.

Belongs to the PAPS reductase family. FAD1 subfamily.

Its subcellular location is the cytoplasm. The catalysed reaction is FMN + ATP + H(+) = FAD + diphosphate. The protein operates within cofactor biosynthesis; FAD biosynthesis; FAD from FMN: step 1/1. Its function is as follows. Catalyzes the adenylation of flavin mononucleotide (FMN) to form flavin adenine dinucleotide (FAD) coenzyme. In Saccharomyces cerevisiae (strain ATCC 204508 / S288c) (Baker's yeast), this protein is Flavin adenine dinucleotide synthase.